The chain runs to 239 residues: Small ribosomal subunit protein uS2 (239 aa).

It belongs to the universal ribosomal protein uS2 family.

This is Small ribosomal subunit protein uS2 from Histophilus somni (strain 129Pt) (Haemophilus somnus).